A 195-amino-acid polypeptide reads, in one-letter code: Thioredoxin reductase-like selenoprotein T (195 aa).

Residues 1-19 (MRLLLLLLVAASAMVRSEA) form the signal peptide. Positions 46–49 (CVSU) form a cross-link, cysteinyl-selenocysteine (Cys-Sec). Position 49 (U49) is a non-standard amino acid, selenocysteine. Residues 85-103 (IASFLSVFKLVLIGLIIVG) form a helical membrane-spanning segment.

The protein belongs to the SelWTH family. Selenoprotein T subfamily. Post-translationally, may contain a selenide-sulfide bond between Cys-46 and Sec-49. This bond is speculated to serve as redox-active pair. In terms of tissue distribution, ubiquitous. Highly expressed in the endocrine pancreas.

The protein resides in the endoplasmic reticulum membrane. The catalysed reaction is [thioredoxin]-dithiol + NADP(+) = [thioredoxin]-disulfide + NADPH + H(+). Functionally, selenoprotein with thioredoxin reductase-like oxidoreductase activity. Protects dopaminergic neurons against oxidative stress and cell death. Involved in ADCYAP1/PACAP-induced calcium mobilization and neuroendocrine secretion. Plays a role in fibroblast anchorage and redox regulation. In gastric smooth muscle, modulates the contraction processes through the regulation of calcium release and MYLK activation. In pancreatic islets, involved in the control of glucose homeostasis, contributes to prolonged ADCYAP1/PACAP-induced insulin secretion. The polypeptide is Thioredoxin reductase-like selenoprotein T (Homo sapiens (Human)).